A 307-amino-acid chain; its full sequence is Probable RuBisCO transcriptional regulator (307 aa).

Residues 5-62 enclose the HTH lysR-type domain; it reads FTLQQLRIFKAIASEKSFTQAAEILFVSQPSLSKQIKTLENRLGILLLNRTGNKILLT. The segment at residues 22–41 is a DNA-binding region (H-T-H motif); sequence FTQAAEILFVSQPSLSKQIK.

Belongs to the LysR transcriptional regulatory family.

The protein resides in the plastid. It localises to the chloroplast. In terms of biological role, trans-acting transcriptional regulator of RuBisCO genes (rbcL and rbcS) expression. The chain is Probable RuBisCO transcriptional regulator (rbcR-A) from Thalassiosira pseudonana (Marine diatom).